We begin with the raw amino-acid sequence, 263 residues long: Phosphatidylglycerol--prolipoprotein diacylglyceryl transferase (263 aa).

Helical transmembrane passes span 6 to 26 (VIFS…VLGI), 50 to 70 (LLTA…VLIY), 85 to 105 (TWEG…AVII), and 112 to 132 (IPIF…LLLG). An a 1,2-diacyl-sn-glycero-3-phospho-(1'-sn-glycerol)-binding site is contributed by arginine 133. 3 helical membrane-spanning segments follow: residues 169 to 189 (LYEA…LFYL), 197 to 217 (GATT…VEFF), and 233 to 253 (MGQL…LGAL).

The protein belongs to the Lgt family.

Its subcellular location is the cell membrane. It catalyses the reaction L-cysteinyl-[prolipoprotein] + a 1,2-diacyl-sn-glycero-3-phospho-(1'-sn-glycerol) = an S-1,2-diacyl-sn-glyceryl-L-cysteinyl-[prolipoprotein] + sn-glycerol 1-phosphate + H(+). Its pathway is protein modification; lipoprotein biosynthesis (diacylglyceryl transfer). Functionally, catalyzes the transfer of the diacylglyceryl group from phosphatidylglycerol to the sulfhydryl group of the N-terminal cysteine of a prolipoprotein, the first step in the formation of mature lipoproteins. The polypeptide is Phosphatidylglycerol--prolipoprotein diacylglyceryl transferase (Wolbachia pipientis subsp. Culex pipiens (strain wPip)).